Reading from the N-terminus, the 302-residue chain is Putative cyclin-D6-1 (302 aa).

This sequence belongs to the cyclin family. Cyclin D subfamily.

The sequence is that of Putative cyclin-D6-1 (CYCD6-1) from Arabidopsis thaliana (Mouse-ear cress).